The chain runs to 243 residues: Protein IN2-1 (243 aa).

Positions Met-1 to Pro-26 are disordered. The GST N-terminal domain occupies Gly-31–Ala-112. Residues Lys-70, Val-84, and Glu-96–Ser-97 each bind glutathione. The region spanning Asp-109–Leu-240 is the GST C-terminal domain.

Belongs to the GST superfamily. HSP26 family. As to expression, leaves and roots. It is more strongly induced in the leaves relative to the roots.

The chain is Protein IN2-1 (IN2-1) from Zea mays (Maize).